Consider the following 172-residue polypeptide: Endoribonuclease YbeY (172 aa).

Residues His-136, His-140, and His-146 each coordinate Zn(2+).

It belongs to the endoribonuclease YbeY family. Requires Zn(2+) as cofactor.

Its subcellular location is the cytoplasm. Functionally, single strand-specific metallo-endoribonuclease involved in late-stage 70S ribosome quality control and in maturation of the 3' terminus of the 16S rRNA. This chain is Endoribonuclease YbeY, found in Rickettsia canadensis (strain McKiel).